A 345-amino-acid chain; its full sequence is Microtubule-associated protein Jupiter (345 aa).

Residues 1-14 (MISNFDCTDNQASS) show a composition bias toward polar residues. A disordered region spans residues 1 to 34 (MISNFDCTDNQASSKVLRPPGGGSSDIFGSEMPQ). Position 24 is a phosphoserine (serine 24). Phosphothreonine is present on threonine 35. The segment covering 78 to 87 (QKTVDSHNRL) has biased composition (basic and acidic residues). The segment at 78-100 (QKTVDSHNRLFGEPTRPITPGKN) is disordered. Phosphothreonine is present on residues threonine 92 and threonine 96. Residues serine 105, serine 134, and serine 145 each carry the phosphoserine modification. Disordered regions lie at residues 127-241 (HYNG…QPHS) and 300-345 (EGNP…SGLW). The segment covering 132–145 (SGSVSSASSSVSSS) has biased composition (low complexity). A compositionally biased stretch (polar residues) spans 146 to 164 (TENLKMNSGSRSVFRNMST). Pro residues predominate over residues 177-191 (LCPPSPVRIEPPTPP). Composition is skewed to polar residues over residues 212-226 (DNST…NEAC) and 315-326 (DYNQRQESSNAG).

Belongs to the MAP Jupiter family.

It localises to the nucleus. Its subcellular location is the cytoplasm. It is found in the cytoskeleton. The protein resides in the spindle. Its function is as follows. Binds to all microtubule populations. The chain is Microtubule-associated protein Jupiter from Drosophila erecta (Fruit fly).